A 2594-amino-acid chain; its full sequence is Protein sevenless (2594 aa).

Disordered regions lie at residues 1–34 and 49–92; these read MFWREDAAQQQQQQQQQQQQQQQQQQPPHPPKRL and KMST…RVRR. Residues 1–2141 are Extracellular-facing; the sequence is MFWREDAAQQ…FVSPEKRGSL (2141 aa). A compositionally biased stretch (low complexity) spans 9–26; sequence QQQQQQQQQQQQQQQQQQ. Asparagine 77, asparagine 401, asparagine 508, asparagine 532, asparagine 641, asparagine 667, asparagine 778, asparagine 797, asparagine 874, and asparagine 980 each carry an N-linked (GlcNAc...) asparagine glycan. 2 Fibronectin type-III domains span residues 358–462 and 468–560; these read ETTQ…TPME and APII…SPLE. Residues 838 to 938 enclose the Fibronectin type-III 3 domain; sequence PPAPRELRAL…APLATRTWPL (101 aa). Residues 1024–1066 form an LDL-receptor class B repeat; that stretch reads GLLYWTDLARDCVQRLDPFSGERELLPIFGARHLALDSAQGHL. Fibronectin type-III domains follow at residues 1227–1317 and 1324–1430; these read LAVP…QLDT and QPRR…VQSV. Residues asparagine 1257, asparagine 1344, asparagine 1382, asparagine 1577, asparagine 1587, asparagine 1665, asparagine 1752, asparagine 1776, asparagine 1824, asparagine 1908, asparagine 1966, and asparagine 2088 are each glycosylated (N-linked (GlcNAc...) asparagine). Fibronectin type-III domains follow at residues 1711-1814, 1821-1920, 1922-2010, and 2014-2132; these read TAAA…TLHT, APRN…SYAP, PPLQ…TLGD, and APGR…AEPF. The helical transmembrane segment at 2142 to 2162 threads the bilayer; that stretch reads VLAIIAPAAIVSSCVLALVLV. The Cytoplasmic portion of the chain corresponds to 2163 to 2594; sequence RKLQKRRHRA…LYANEGISGL (432 aa). Residues 2224 to 2495 form the Protein kinase domain; it reads LTLLRFLGSG…KRCLSTLQAL (272 aa). ATP-binding positions include 2230–2238 and lysine 2257; that span reads LGSGAFGEV. The Proton acceptor role is filled by aspartate 2355. Tyrosine 2391 carries the post-translational modification Phosphotyrosine; by autocatalysis. The interval 2543 to 2568 is disordered; it reads TVSTTDADTTGSPTTPTAPTTPTTTT. Over residues 2545–2568 the composition is skewed to low complexity; sequence STTDADTTGSPTTPTAPTTPTTTT.

The protein belongs to the protein kinase superfamily. Tyr protein kinase family. Insulin receptor subfamily.

Its subcellular location is the cell membrane. The catalysed reaction is L-tyrosyl-[protein] + ATP = O-phospho-L-tyrosyl-[protein] + ADP + H(+). Receptor for an extracellular signal required to instruct a cell to differentiate into a R7 photoreceptor. The ligand for Sev is the Boss (Bride of Sevenless) protein. The sequence is that of Protein sevenless (sev) from Drosophila virilis (Fruit fly).